Consider the following 718-residue polypeptide: Putative proline-rich receptor-like protein kinase PERK11 (718 aa).

Positions 1–256 (MDKVQQQADL…GGTSQQSNES (256 aa)) are disordered. Residues 1–262 (MDKVQQQADL…SNESNYTEKT (262 aa)) lie on the Extracellular side of the membrane. Pro residues-rich tracts occupy residues 45 to 105 (ATSP…PPQS), 115 to 132 (IPFP…PPPS), and 157 to 167 (LPSPPSTPFSP). 2 stretches are compositionally biased toward low complexity: residues 168–203 (PSQE…LQPL) and 211–244 (SNRV…ANSN). 3 N-linked (GlcNAc...) asparagine glycosylation sites follow: N231, N254, and N257. The helical transmembrane segment at 263–283 (VIGIGIAGVLVILFIAGVFFV) threads the bilayer. Topologically, residues 284-718 (RRKQKKGSSS…RAFNTSHRNH (435 aa)) are cytoplasmic. Residues 314-348 (HYRQKPGNGNSSAQNSSPDTNSLGNPKHGRGTPDS) are disordered. Residues 320–337 (GNGNSSAQNSSPDTNSLG) show a composition bias toward polar residues. T359 bears the Phosphothreonine mark. One can recognise a Protein kinase domain in the interval 370–649 (FCKSFVVGEG…VRALDTRDDL (280 aa)). ATP contacts are provided by residues 376–384 (VGEGGFGCV) and K398. A Phosphotyrosine modification is found at Y443. D494 acts as the Proton acceptor in catalysis. Residues S498 and S527 each carry the phosphoserine modification. Residues T528 and T533 each carry the phosphothreonine modification. Phosphotyrosine is present on Y541. Positions 683 to 718 (SSDLGTNTGYYPSQDYATSHEYESESRAFNTSHRNH) are disordered. Composition is skewed to polar residues over residues 685–699 (DLGT…QDYA) and 709–718 (RAFNTSHRNH).

This sequence belongs to the protein kinase superfamily. Ser/Thr protein kinase family. As to expression, mostly expressed in flower buds.

The protein resides in the cell membrane. The enzyme catalyses L-seryl-[protein] + ATP = O-phospho-L-seryl-[protein] + ADP + H(+). The catalysed reaction is L-threonyl-[protein] + ATP = O-phospho-L-threonyl-[protein] + ADP + H(+). This Arabidopsis thaliana (Mouse-ear cress) protein is Putative proline-rich receptor-like protein kinase PERK11 (PERK11).